The sequence spans 98 residues: MAVERVSGGSSLIDVLDRVLDKGIVIDAWVRISLVGIDLITVEARVVVASIDTYLKYADAVGLTGLVSRPQLTEVVEEPVVVEAPATRRTARPSRRRI.

It belongs to the gas vesicle GvpA family. In terms of assembly, the gas vesicle shell is 2 nm thick and consists of a single layer of this protein. It forms helical ribs nearly perpendicular to the long axis of the vesicle.

Its subcellular location is the gas vesicle shell. Gas vesicles are hollow, gas filled proteinaceous nanostructures found in some microorganisms. During planktonic growth they allow positioning of the organism at a favorable depth for light or nutrient acquisition. GvpA forms the protein shell. The polypeptide is Gas vesicle protein A (Koribacter versatilis (strain Ellin345)).